The sequence spans 909 residues: Tubulin polyglutamylase TTLL7 (909 aa).

In terms of domain architecture, TTL spans 40 to 392; sequence NGAITANVVG…RASDKKKNLA (353 aa). Residues lysine 162, 168–169, 190–193, and 203–205 contribute to the ATP site; these read MG, QEYL, and KFD. L-glutamate is bound at residue arginine 229. Residue 251 to 252 coordinates ATP; sequence TN. L-glutamate-binding residues include tyrosine 253, serine 254, and lysine 273. Mg(2+) is bound by residues aspartate 338, glutamate 351, and asparagine 353. An L-glutamate-binding site is contributed by lysine 369. Positions 390-452 are c-MTBD region; it reads NLAKQKAEAQ…ISREEYENRH (63 aa). Disordered regions lie at residues 517 to 580 and 603 to 688; these read DEKL…KVSY and KAAR…PSIS. The segment covering 518 to 531 has biased composition (basic and acidic residues); the sequence is EKLSGKPTRPKEPR. Over residues 532-542 the composition is skewed to polar residues; sequence TLSSMPESTQT. Low complexity predominate over residues 548–562; the sequence is NYSSHSSSNSTGSSS. Residues 571–580 are compositionally biased toward basic and acidic residues; it reads KEGKEKKVSY. The span at 604-625 shows a compositional bias: low complexity; it reads AARPFSNSSSPSSAASMRRSVS. Positions 626-657 are enriched in polar residues; the sequence is CPRSITALNTQSPTTDQRPFSSRISSTITRPL. Positions 658–673 are enriched in low complexity; that stretch reads SGNRTNSLNRSSSSNR. Over residues 674–688 the composition is skewed to polar residues; the sequence is VPQSGTSGSVYPSIS.

This sequence belongs to the tubulin--tyrosine ligase family. Interacts with both alpha- and beta-tubulin (via C-terminal tubulin tails). Requires Mg(2+) as cofactor.

Its subcellular location is the cell projection. It is found in the cilium. The protein resides in the cytoplasm. The protein localises to the cytoskeleton. It localises to the cilium basal body. Its subcellular location is the dendrite. It is found in the perikaryon. The enzyme catalyses L-glutamyl-[protein] + L-glutamate + ATP = gamma-L-glutamyl-L-glutamyl-[protein] + ADP + phosphate + H(+). It catalyses the reaction (L-glutamyl)(n)-gamma-L-glutamyl-L-glutamyl-[protein] + L-glutamate + ATP = (L-glutamyl)(n+1)-gamma-L-glutamyl-L-glutamyl-[protein] + ADP + phosphate + H(+). In terms of biological role, polyglutamylase which modifies tubulin, generating polyglutamate side chains of variable lengths on the gamma-carboxyl group of specific glutamate residues within the C-terminal tail of tubulin. Mediates both ATP-dependent initiation and elongation steps of the polyglutamylation reaction. Preferentially modifies the beta-tubulin tail over an alpha-tail. Competes with monoglycylase TTLL3 for modification site on beta-tubulin substrate, thereby creating an anticorrelation between glycylation and glutamylation reactions. This chain is Tubulin polyglutamylase TTLL7, found in Xenopus tropicalis (Western clawed frog).